The chain runs to 840 residues: Phosphatidylglycerol lysyltransferase (840 aa).

At 1-8 (MNQEVKNK) the chain is on the cytoplasmic side. The helical transmembrane segment at 9–29 (IFSILKITFATALFIFVVITL) threads the bilayer. Residues 30–52 (YRELSGINFKDTLVEFSKINRMS) are Extracellular-facing. Residues 53-73 (LVLLFIGGGASLVILSMYDVI) form a helical membrane-spanning segment. Over 74–89 (LSRALKMDISLGKVLR) the chain is Cytoplasmic. The helical transmembrane segment at 90–110 (VSYIINALNAIVGFGGFIGAG) threads the bilayer. Residues 111 to 128 (VRAMVYKNYTHDKKKLVH) lie on the Extracellular side of the membrane. The helical transmembrane segment at 129–149 (FISLILISMLTGLSLLSLLIV) threads the bilayer. At 150–161 (FHVFDASLILNK) the chain is on the cytoplasmic side. The chain crosses the membrane as a helical span at residues 162-182 (ITWVRWVLYAVSLFLPLFIIY). The Extracellular portion of the chain corresponds to 183 to 200 (SMVRPPDKNNRYVGLYCT). The helical transmembrane segment at 201–221 (LVSCVEWLAAAVVLYFCGVIV) threads the bilayer. Over 222–229 (DVHVSFMS) the chain is Cytoplasmic. Residues 230-250 (FIAIFIIAALSGLVSFIPGGF) traverse the membrane as a helical segment. Over 251-271 (GAFDLVVLLGFKTLGVPEEKV) the chain is Extracellular. A helical transmembrane segment spans residues 272 to 292 (LLMLLLYRFAYYFVPVIIALI). Topologically, residues 293–337 (LSSFEFGTSAKKYIEGSKYFIPAKDVTSFLMSYQKDIIAKIPSLS) are cytoplasmic. Residues 338–358 (LAILVFFTSMIFFVNNLTIVY) form a helical membrane-spanning segment. Topologically, residues 359–369 (DALYDGNHLTY) are extracellular. Residues 370–390 (YLLLAIHTSACLLLLLNVVGI) traverse the membrane as a helical segment. The Cytoplasmic portion of the chain corresponds to 391–394 (YKQS). 2 consecutive transmembrane segments (helical) span residues 395-415 (RRAI…TLFT) and 416-436 (YASY…IVAF). Topologically, residues 437-450 (RRARRLKRPIRMRN) are cytoplasmic. A helical transmembrane segment spans residues 451–471 (LVAMLLFSIFILYINHIFIAG). The Extracellular portion of the chain corresponds to 472 to 489 (TFYALDVYTIEMHTSVLK). The helical transmembrane segment at 490–510 (YYFWITILIIAIIVGAIAWLF) threads the bilayer. At 511–840 (DYQFSKVRIS…SKVMRVIRHK (330 aa)) the chain is on the cytoplasmic side.

The protein belongs to the LPG synthase family.

The protein resides in the cell membrane. It catalyses the reaction L-lysyl-tRNA(Lys) + a 1,2-diacyl-sn-glycero-3-phospho-(1'-sn-glycerol) = a 1,2-diacyl-sn-glycero-3-phospho-1'-(3'-O-L-lysyl)-sn-glycerol + tRNA(Lys). Catalyzes the transfer of a lysyl group from L-lysyl-tRNA(Lys) to membrane-bound phosphatidylglycerol (PG), which produces lysylphosphatidylglycerol (LPG), a major component of the bacterial membrane with a positive net charge. LPG synthesis contributes to bacterial virulence as it is involved in the resistance mechanism against cationic antimicrobial peptides (CAMP) produces by the host's immune system (defensins, cathelicidins) and by the competing microorganisms (bacteriocins). In fact, the modification of anionic phosphatidylglycerol with positively charged L-lysine results in repulsion of the peptides. The chain is Phosphatidylglycerol lysyltransferase (mprF) from Staphylococcus aureus (strain MRSA252).